A 457-amino-acid polypeptide reads, in one-letter code: Fibrinogen C domain-containing protein 1 (457 aa).

The interval 1-20 (MGSDRWKNIGGAPQMEDSVQ) is disordered. Residues 1 to 33 (MGSDRWKNIGGAPQMEDSVQDKSQRKGCGYILC) lie on the Cytoplasmic side of the membrane. A helical; Signal-anchor for type II membrane protein transmembrane segment spans residues 34–54 (TVLLSVAVLLAVTVTGAVLFM). Residues 55 to 457 (NHYHAPSTEP…MKIRPQREEN (403 aa)) lie on the Extracellular side of the membrane. The interval 211-235 (RPRVKADLQRAPSRSSRPRGCANGS) is disordered. Positions 231–454 (CANGSKPRDC…FTEMKIRPQR (224 aa)) constitute a Fibrinogen C-terminal domain. N-linked (GlcNAc...) asparagine glycosylation occurs at Asn233. Cys240 and Cys269 form a disulfide bridge. N-linked (GlcNAc...) asparagine glycosylation is present at Asn336. 2 residues coordinate Ca(2+): Asp389 and Asp391. A disulfide bridge links Cys397 with Cys410.

In terms of assembly, homotetramer; disulfide-linked.

The protein localises to the membrane. Its function is as follows. Acetyl group-binding receptor which shows a calcium-dependent binding to acetylated structures such as chitin, some N-acetylated carbohydrates, and amino acids. This chain is Fibrinogen C domain-containing protein 1 (fibcd1), found in Xenopus tropicalis (Western clawed frog).